A 135-amino-acid chain; its full sequence is Large ribosomal subunit protein mL41B (135 aa).

The transit peptide at 1–13 (MGLITKIARGLVR) directs the protein to the mitochondrion.

This sequence belongs to the mitochondrion-specific ribosomal protein mL41 family. As to quaternary structure, component of the mitochondrial ribosome large subunit (39S) which comprises a 16S rRNA and about 50 distinct proteins.

It localises to the mitochondrion. Functionally, component of the mitochondrial ribosome large subunit. Also involved in apoptosis and cell cycle. The protein is Large ribosomal subunit protein mL41B (mrpl41-b) of Xenopus laevis (African clawed frog).